Reading from the N-terminus, the 257-residue chain is Triosephosphate isomerase (257 aa).

Substrate contacts are provided by asparagine 12 and lysine 14. Histidine 98 functions as the Electrophile in the catalytic mechanism. Residue glutamate 169 is the Proton acceptor of the active site.

This sequence belongs to the triosephosphate isomerase family. As to quaternary structure, homodimer.

The enzyme catalyses D-glyceraldehyde 3-phosphate = dihydroxyacetone phosphate. The protein operates within carbohydrate biosynthesis; gluconeogenesis. Its pathway is carbohydrate degradation; glycolysis; D-glyceraldehyde 3-phosphate from glycerone phosphate: step 1/1. The chain is Triosephosphate isomerase (tpiA) from Dictyostelium discoideum (Social amoeba).